Reading from the N-terminus, the 92-residue chain is Small ribosomal subunit protein bS20 (92 aa).

Residues 1-20 are disordered; that stretch reads MANIASAKKRARQAENNRAH.

The protein belongs to the bacterial ribosomal protein bS20 family.

Binds directly to 16S ribosomal RNA. This chain is Small ribosomal subunit protein bS20, found in Methylococcus capsulatus (strain ATCC 33009 / NCIMB 11132 / Bath).